The following is a 93-amino-acid chain: Putative hemolysin E-like protein (93 aa).

Belongs to the hemolysin E family.

This chain is Putative hemolysin E-like protein, found in Escherichia coli O6:H1 (strain CFT073 / ATCC 700928 / UPEC).